The following is a 170-amino-acid chain: Calcineurin subunit B type 2 (170 aa).

EF-hand domains lie at 18–46 (DEIR…FMSL), 50–85 (QQNP…FSVK), 87–122 (DKLS…MVGN), and 128–163 (QLQQ…TDIH). Residues Asp31, Asp33, Ser35, Glu42, Asp63, Asp65, Asn67, Glu69, Glu74, Asp100, Asp102, Asp104, Tyr106, Glu111, Asp141, Asp143, Asp145, Lys147, and Glu152 each contribute to the Ca(2+) site. Position 35 is a phosphoserine (Ser35).

The protein belongs to the calcineurin regulatory subunit family. In terms of assembly, composed of a catalytic subunit (A) and a regulatory subunit (B). Interacts with sra.

Its function is as follows. Calcineurin is a calcium-binding and calmodulin-binding protein found in all cells from yeast to mammals, and a calcium-dependent, calmodulin-stimulated protein phosphatase. In Drosophila melanogaster (Fruit fly), this protein is Calcineurin subunit B type 2 (CanB2).